Consider the following 248-residue polypeptide: Ras-like protein family member 11B (248 aa).

A small GTPase-like region spans residues 29 to 246 (AGRRLVKIAV…ALSAKVRTVT (218 aa)). Residues 40–47 (GASGVGKT), 87–91 (DTPGI), and 152–155 (NKAD) contribute to the GTP site. The interval 205–229 (QQPSGTPEKRRTSLIPRPKSPNMQD) is disordered.

Belongs to the small GTPase superfamily. Ras family.

The enzyme catalyses GTP + H2O = GDP + phosphate + H(+). This Bos taurus (Bovine) protein is Ras-like protein family member 11B.